The primary structure comprises 99 residues: Small integral membrane protein 14 (99 aa).

Residues 1 to 49 (MAEGGFDPCECVCSHEHAMRRLINLLRQSQSYCTDTECLQELPGPSGDN) are Lumenal-facing. A helical membrane pass occupies residues 50–70 (GISVTMILVAWMVIALILFLL). At 71–99 (RPPNLRGSSLPGKPTSPHNGQDPPAPPVD) the chain is on the cytoplasmic side. Residues 78–99 (SSLPGKPTSPHNGQDPPAPPVD) are disordered.

The protein localises to the endoplasmic reticulum membrane. The chain is Small integral membrane protein 14 (SMIM14) from Homo sapiens (Human).